The following is a 211-amino-acid chain: Large ribosomal subunit protein uL4 (211 aa).

The disordered stretch occupies residues 44-94 (RSGNHATKTRSEVRGGGKKPWSQKGTGHARQGSTRAPHWVGGGTVHGPQKR).

The protein belongs to the universal ribosomal protein uL4 family. As to quaternary structure, part of the 50S ribosomal subunit.

Its function is as follows. One of the primary rRNA binding proteins, this protein initially binds near the 5'-end of the 23S rRNA. It is important during the early stages of 50S assembly. It makes multiple contacts with different domains of the 23S rRNA in the assembled 50S subunit and ribosome. In terms of biological role, forms part of the polypeptide exit tunnel. This chain is Large ribosomal subunit protein uL4, found in Leptospira borgpetersenii serovar Hardjo-bovis (strain JB197).